The following is a 455-amino-acid chain: Bifunctional protein GlmU (455 aa).

Positions Met-1–Arg-226 are pyrophosphorylase. UDP-N-acetyl-alpha-D-glucosamine contacts are provided by residues Leu-8–Gly-11, Lys-22, Gln-73, Gly-78–Thr-79, Tyr-99–Asp-101, Gly-136, Glu-151, Asn-166, and Asn-224. Asp-101 is a Mg(2+) binding site. Mg(2+) is bound at residue Asn-224. Residues Lys-227 to Gly-247 are linker. The N-acetyltransferase stretch occupies residues Gly-248–Asp-455. 2 residues coordinate UDP-N-acetyl-alpha-D-glucosamine: Arg-330 and Lys-348. Catalysis depends on His-360, which acts as the Proton acceptor. UDP-N-acetyl-alpha-D-glucosamine-binding residues include Tyr-363 and Asn-374. Acetyl-CoA is bound by residues Ala-377, Asn-383–Tyr-384, Ser-402, Ala-420, and Arg-437.

In the N-terminal section; belongs to the N-acetylglucosamine-1-phosphate uridyltransferase family. This sequence in the C-terminal section; belongs to the transferase hexapeptide repeat family. As to quaternary structure, homotrimer. Mg(2+) is required as a cofactor.

Its subcellular location is the cytoplasm. The enzyme catalyses alpha-D-glucosamine 1-phosphate + acetyl-CoA = N-acetyl-alpha-D-glucosamine 1-phosphate + CoA + H(+). It catalyses the reaction N-acetyl-alpha-D-glucosamine 1-phosphate + UTP + H(+) = UDP-N-acetyl-alpha-D-glucosamine + diphosphate. Its pathway is nucleotide-sugar biosynthesis; UDP-N-acetyl-alpha-D-glucosamine biosynthesis; N-acetyl-alpha-D-glucosamine 1-phosphate from alpha-D-glucosamine 6-phosphate (route II): step 2/2. It functions in the pathway nucleotide-sugar biosynthesis; UDP-N-acetyl-alpha-D-glucosamine biosynthesis; UDP-N-acetyl-alpha-D-glucosamine from N-acetyl-alpha-D-glucosamine 1-phosphate: step 1/1. The protein operates within bacterial outer membrane biogenesis; LPS lipid A biosynthesis. Catalyzes the last two sequential reactions in the de novo biosynthetic pathway for UDP-N-acetylglucosamine (UDP-GlcNAc). The C-terminal domain catalyzes the transfer of acetyl group from acetyl coenzyme A to glucosamine-1-phosphate (GlcN-1-P) to produce N-acetylglucosamine-1-phosphate (GlcNAc-1-P), which is converted into UDP-GlcNAc by the transfer of uridine 5-monophosphate (from uridine 5-triphosphate), a reaction catalyzed by the N-terminal domain. This is Bifunctional protein GlmU from Pseudomonas savastanoi pv. phaseolicola (strain 1448A / Race 6) (Pseudomonas syringae pv. phaseolicola (strain 1448A / Race 6)).